The sequence spans 879 residues: MEKMGLNQVREAYLKFFESKGHLRLPSFSVVPKNDKSLLLINAGMAPLKPYFTGLQTPPRKRVTTCQKCIRTGDIENVGKTSRHATFFEMMGNFSFGDYFKNEVIPWAWEFTTEVLKLPKEKLYVTIYLDDDEAYDIWTSKTDVDPKHIFRLGKEDNFWEHGVGPCGPCSEIHFYKDNGEIKSAEEFIEKSDADRAVEFWNLVFTQFDKDEDGNYNRLEFPNIDTGMGLERMATIMQGVETIFEVDTIKSILDKVAALANTKYGEDELKDVSLRIITDHVRSVSVMISDEVLPSNEGRGYVLRRLLRRAARHGKLLGIKGTFLYKIVDSVIENSGEAYPELKEKKDYIKKVISIEEERFAETIDSGMEILKEYIEDLEKNNKKVLSGEKVFKLYDTYGFPLELTEEILEEKGITVDMDSFNKEMKEQRERARAARSESTYMGTDVKILDTIPSEIETTFDGYENLELQSKVKVIIKDDAFADCINKGEKGIIVTDRTPFYAEMGGQIGDKGTISADGFMAKVQDCKNNIGGKIVHFVEVTEGSIKLEDEVLLEVDRKRRENIGKNHSATHLLHAALRKVVGEHVHQSGSYVDEDKLRFDFTHFESLTHEELKKVEDLVNDTIESVWDVVTKEMTIEEAKNSGAMALFDEKYGDKVRVVKMGDFSTELCGGTHISNVGKIGLFKIVSESGIAAGTRRIEAVTGHKALEFIEHKSDLLRQIASMLKCSEKDIINRLNQQNAELKDKDKEISALKSKLASGSEDDILKNIKEVKGVKLAVAALKDVDGEALRNLGDKIKNKIESGVVVLGSEVEGKVQFIAMASKDVVSKGVHCGTIVREIAKIAGGGGGGRPDMAQAGGRLPEKLNDAINEVENIMENLVK.

The Zn(2+) site is built by histidine 566, histidine 570, cysteine 668, and histidine 672.

The protein belongs to the class-II aminoacyl-tRNA synthetase family. It depends on Zn(2+) as a cofactor.

Its subcellular location is the cytoplasm. It catalyses the reaction tRNA(Ala) + L-alanine + ATP = L-alanyl-tRNA(Ala) + AMP + diphosphate. Catalyzes the attachment of alanine to tRNA(Ala) in a two-step reaction: alanine is first activated by ATP to form Ala-AMP and then transferred to the acceptor end of tRNA(Ala). Also edits incorrectly charged Ser-tRNA(Ala) and Gly-tRNA(Ala) via its editing domain. This Clostridium novyi (strain NT) protein is Alanine--tRNA ligase.